Reading from the N-terminus, the 1642-residue chain is Mitochondrial 3' processome subunit 2 (1642 aa).

The transit peptide at 1–27 (MGLPFLCHTRVCLFSNKIPFVLCGSRF) directs the protein to the mitochondrion. 2 disordered regions span residues 43-69 (ETLN…PQKK) and 745-772 (KGEK…LSGP). A compositionally biased stretch (polar residues) spans 49–65 (ELSSPSTSKEPSVGSDS).

As to quaternary structure, component of the mitochondrial 3' processome (MPsome) complex composed at least of terminal uridylyltransferase KRET1/TUT1, 3'-5' exonuclease DSS1, MPSS1, MPSS2 and MPSS3. Within the complex, interacts with DSS1.

Its subcellular location is the mitochondrion. Its function is as follows. As part of the mitochondrial 3' processome (MPsome), involved in the maturation of guided RNA (gRNA) precursors. This is Mitochondrial 3' processome subunit 2 from Trypanosoma brucei brucei.